The following is a 381-amino-acid chain: MSLNMFWFLPTHGDGHYLGTEEGSRPVDHGYLQQIAQAADRLGYTGVLIPTGRSCEDAWLVAASMIPVTQRLKFLVALRPSVTSPTVAARQAATLDRLSNGRALFNLVTGSDPQELAGDGVFLDHSERYEASAEFTQVWRRLLLGETVDFNGKHIHVRGAKLLFPPIQQPYPPLYFGGSSDVAQELAAEQVDLYLTWGEPPELVKEKIEQVRAKAAAHGRKIRFGIRLHVIVRETNGEAWQAAERLISHLDDETIAKAQAAFARTDSVGQQRMAALHNGKRDNLEISPNLWAGVGLVRGGAGTALVGDGPTVAARINEYAALGIDSFVLSGYPHLEEAYRVGELLFPHLDVAIPEIPQPQPLNPQGEAVANDFIPRNVAQS.

Belongs to the SsuD family. Homotetramer.

The catalysed reaction is an alkanesulfonate + FMNH2 + O2 = an aldehyde + FMN + sulfite + H2O + 2 H(+). Functionally, catalyzes the desulfonation of aliphatic sulfonates. The sequence is that of Alkanesulfonate monooxygenase from Escherichia coli (strain SMS-3-5 / SECEC).